The primary structure comprises 376 residues: Inactive CLIP domain-containing serine protease A28 (376 aa).

An N-terminal signal peptide occupies residues 1 to 19 (MKVLLFCIVISLTTLIASG). In terms of domain architecture, Clip spans 24-80 (EELRCPGGYCVSKYLCPNGTFIDDIKHAQTTQLIGLRAGLDIDDFDDCNDYLLVCCQ). 3 disulfide bridges follow: cysteine 28/cysteine 78, cysteine 33/cysteine 71, and cysteine 39/cysteine 79. Asparagine 41 carries N-linked (GlcNAc...) asparagine glycosylation. Residues 85–106 (PTATSTEKPATSDELIEPPPST) form a disordered region. The Peptidase S1 domain maps to 114–364 (NEGGLIYDLR…YVQWLNEHIV (251 aa)). N-linked (GlcNAc...) asparagine glycans are attached at residues asparagine 125 and asparagine 279. Cystine bridges form between cysteine 251/cysteine 321, cysteine 280/cysteine 301, and cysteine 311/cysteine 340. Asparagine 369 is a glycosylation site (N-linked (GlcNAc...) asparagine).

This sequence belongs to the peptidase S1 family. CLIP subfamily. As to quaternary structure, may form a heterodimer of a light chain and a heavy chain; disulfide-linked. Secreted as a full-length protein. Proteolytically cleaved into two chains which probably remain covalently linked. Cleavage is induced by fungus B.bassiana and Gram-positive or Gram-negative bacteria infection.

It is found in the secreted. Inactive serine protease which plays an essential role in the innate immune response against bacteria, fungi and protozoa infection by activating the melanization cascade. In the melanization cascade, acts downstream of TEP1, SPCLIP1 and CLIPA8 to promote CLIPC9 proteolytic cleavage. In the susceptible strain G3, appears to be dispensable for parasite P.berghei ookinete elimination which occurs by lysis. Required for the melanization of Gram-positive and Gram-negative bacteria. Required for the melanization of fungus B.bassiana. The protein is Inactive CLIP domain-containing serine protease A28 of Anopheles gambiae (African malaria mosquito).